A 534-amino-acid chain; its full sequence is (E)-beta-farnesene synthase (534 aa).

Mg(2+) is bound by residues Asp-287, Asp-291, Asn-431, Ser-435, and Glu-439. Positions 287 to 291 (DDMMD) match the DDXXD motif motif.

Belongs to the terpene synthase family. Requires Mg(2+) as cofactor. It depends on Co(2+) as a cofactor. Mn(2+) is required as a cofactor.

The protein localises to the cytoplasm. It catalyses the reaction (2E,6E)-farnesyl diphosphate = (E)-beta-farnesene + diphosphate. It participates in secondary metabolite biosynthesis; terpenoid biosynthesis. Its function is as follows. Sesquiterpene cyclase catalyzing the production of beta-farnesene and alpha-bergamotene in equal amounts from farnesyl diphosphate. Involved in indirect defense by producing volatile signals attracting natural enemies of herbivores. This Zea mays subsp. mexicana (Mexican teosinte) protein is (E)-beta-farnesene synthase.